The following is a 177-amino-acid chain: MRGLGGSTETALRLGSDAKDRVYRAWDGFIDFAARDNVLEVALGLIIAQAFTSVVNSFVSDIVLPLVSLLPFIMRNMDEKFAILSKGPHYQEGYNTIEQARDDGALVLAYGVFLEKIVNFLGISLTLYTLAQLYMVFSKRKIIKRTVKCKYCRKWISERALRCVNCSSWQDGREDVQ.

2 helical membrane passes run 54 to 74 (VVNS…PFIM) and 117 to 137 (IVNF…YMVF). Residue Asn165 is glycosylated (N-linked (GlcNAc...) asparagine).

Its subcellular location is the membrane. It participates in secondary metabolite biosynthesis; terpenoid biosynthesis. Functionally, part of the gene cluster that mediates the biosynthesis of anditomin, a fungal meroterpenoid. The first step of the pathway is the synthesis of 3,5-dimethylorsellinic acid (DMOA) by the polyketide synthase andM. DMOA is then converted to the phthalide compound 5,7-dihydroxy-4,6-dimethylphthalide (DHDMP) by the cytochrome P450 monooxygenase andK, which is further prenylated by the prenyltransferase andD to yield farnesyl-DHDMP. Further epoxidation by the FAD-dependent monooxygenase andE leads to epoxyfarnesyl-DHDMP. The next step involves the terpene cyclase andB that converts epoxyfarnesyl-DHDMP into preandiloid A through opening of the epoxide ring followed by the cyclization of the farnesyl moiety. Preandiloid A is in turn oxidized at the C-3 hydroxyl group to yield preandiloid B by the dehydrogenase andC. The dioxygenase andA is solely responsible for the dehydrogenation of preandiloid B leading to the enone preandiloid C, as well as for the intriguing structural rearrangement to generate the bicyclo[2.2.2]octane core, transforming preandiloid C into andiconin. FAD-binding monooxygenase andJ then produces andilesin D which is reduced by dehydrogenase andI to yield andilesin A. Action of acetyltransferase andG followed by a spontaneous acetate elimination leads then to andilesin B, which is in turn substrate of the short chain dehydrogenase andH to yield andilesin C. Finally, the dioxygenase andF catalyzes the transformation of andilesin C to anditomin. The exact role of andL within the anditomin biosynthetic pathway has not been identified yet. This chain is Anditomin synthesis protein L, found in Emericella variicolor (Aspergillus stellatus).